Consider the following 279-residue polypeptide: Ribosomal RNA small subunit methyltransferase I (279 aa).

It belongs to the methyltransferase superfamily. RsmI family.

The protein localises to the cytoplasm. It catalyses the reaction cytidine(1402) in 16S rRNA + S-adenosyl-L-methionine = 2'-O-methylcytidine(1402) in 16S rRNA + S-adenosyl-L-homocysteine + H(+). Functionally, catalyzes the 2'-O-methylation of the ribose of cytidine 1402 (C1402) in 16S rRNA. This Synechocystis sp. (strain ATCC 27184 / PCC 6803 / Kazusa) protein is Ribosomal RNA small subunit methyltransferase I.